The chain runs to 275 residues: Large ribosomal subunit protein uL2 (275 aa).

Residues V224–G251 form a disordered region.

This sequence belongs to the universal ribosomal protein uL2 family. Part of the 50S ribosomal subunit. Forms a bridge to the 30S subunit in the 70S ribosome.

Its function is as follows. One of the primary rRNA binding proteins. Required for association of the 30S and 50S subunits to form the 70S ribosome, for tRNA binding and peptide bond formation. It has been suggested to have peptidyltransferase activity; this is somewhat controversial. Makes several contacts with the 16S rRNA in the 70S ribosome. This chain is Large ribosomal subunit protein uL2, found in Heliobacterium modesticaldum (strain ATCC 51547 / Ice1).